Reading from the N-terminus, the 418-residue chain is Serine protease inhibitor A3K (418 aa).

A signal peptide spans 1–21; it reads MAFIVAMGMILMAGICPAVLC. 4 N-linked (GlcNAc...) asparagine glycosylation sites follow: asparagine 39, asparagine 105, asparagine 185, and asparagine 270. Positions 369-394 are RCL; sequence GTEAAAATGVIGGIRKAILPAVHFNR.

Belongs to the serpin family. In terms of tissue distribution, expressed in liver and secreted in plasma.

The protein localises to the secreted. In terms of biological role, contrapsin inhibits trypsin-like proteases. This chain is Serine protease inhibitor A3K (Serpina3k), found in Mus musculus (Mouse).